A 378-amino-acid polypeptide reads, in one-letter code: UDP-N-acetylglucosamine 2-epimerase (378 aa).

Histidine 214 is a catalytic residue.

It belongs to the UDP-N-acetylglucosamine 2-epimerase family.

It carries out the reaction UDP-N-acetyl-alpha-D-glucosamine = UDP-N-acetyl-alpha-D-mannosamine. Its pathway is bacterial outer membrane biogenesis; LPS O-antigen biosynthesis. This is UDP-N-acetylglucosamine 2-epimerase (rfbC) from Salmonella borreze.